Here is a 442-residue protein sequence, read N- to C-terminus: C4-dicarboxylate transport protein 2 (442 aa).

Transmembrane regions (helical) follow at residues 20–39 (QLYV…GHYY), 52–74 (AFIK…TGIA), 89–111 (AMLY…ANVV), 141–158 (VTGF…GAFA), 162–179 (ILQV…LALV), 200–221 (LVSV…FTIG), 231–253 (LAML…LGAV), 342–364 (ILLL…AGFI), and 368–387 (ATLS…ILGV).

Belongs to the dicarboxylate/amino acid:cation symporter (DAACS) (TC 2.A.23) family.

Its subcellular location is the cell inner membrane. Its function is as follows. Responsible for the transport of dicarboxylates such as succinate, fumarate, and malate from the periplasm across the membrane. This transport system plays an important role in the energy supply of rhizobium-legume symbionts. The protein is C4-dicarboxylate transport protein 2 (dctA2) of Mesorhizobium japonicum (strain LMG 29417 / CECT 9101 / MAFF 303099) (Mesorhizobium loti (strain MAFF 303099)).